Here is a 277-residue protein sequence, read N- to C-terminus: MEMO1 family protein CTN_0605 (277 aa).

It belongs to the MEMO1 family.

The polypeptide is MEMO1 family protein CTN_0605 (Thermotoga neapolitana (strain ATCC 49049 / DSM 4359 / NBRC 107923 / NS-E)).